The following is a 323-amino-acid chain: Small ribosomal subunit protein uS2 (323 aa).

The disordered stretch occupies residues 295–323 (VVNRDRAGFNKKQPKAEEAAKPAEKKAEK).

This sequence belongs to the universal ribosomal protein uS2 family.

This chain is Small ribosomal subunit protein uS2, found in Mycoplasmoides gallisepticum (strain R(low / passage 15 / clone 2)) (Mycoplasma gallisepticum).